The following is an 81-amino-acid chain: Large ribosomal subunit protein bL27m (81 aa).

Residues 1–11 (MATKKSGGSSR) show a composition bias toward polar residues. Residues 1-20 (MATKKSGGSSRNGRDSKGRR) form a disordered region.

This sequence belongs to the bacterial ribosomal protein bL27 family.

The protein resides in the mitochondrion. The chain is Large ribosomal subunit protein bL27m (RPL27) from Reclinomonas americana.